The chain runs to 432 residues: Testis-specific Y-encoded-like protein 1 (432 aa).

3 disordered regions span residues Met1–Ser31, Ala54–Ala110, and Thr116–Glu135. Lys160 is covalently cross-linked (Glycyl lysine isopeptide (Lys-Gly) (interchain with G-Cter in SUMO2)).

It belongs to the nucleosome assembly protein (NAP) family. Post-translationally, ubiquitinated by the CRL2(APPBP2) complex, which recognizes the Arg-Xaa-Xaa-Gly sequence at the C-terminus, leading to its degradation.

It is found in the nucleus. The protein localises to the nucleolus. This is Testis-specific Y-encoded-like protein 1 (TSPYL1) from Bos taurus (Bovine).